The chain runs to 223 residues: GTP-binding nuclear protein Ran (223 aa).

The region spanning 8–172 is the Small GTPase Ran-type domain; sequence VVAEFKLVLV…LWILRKLTGD (165 aa). 19–26 is a GTP binding site; it reads DGGVGKTT. Positions 38–46 are switch-I; sequence KRYIATQGV. GTP contacts are provided by residues glycine 69, 123–126, and 151–153; these read NKVD and SAK. Residues 69–85 form a switch-II region; that stretch reads GQEKLGGLREGYYIGAD.

Belongs to the small GTPase superfamily. Ran family. As to quaternary structure, monomer. Found in a nuclear export complex with RanGTP, exportin and pre-miRNA.

The protein localises to the nucleus. Functionally, GTP-binding protein involved in nucleocytoplasmic transport. Required for the import of protein into the nucleus and also for RNA export. Involved in chromatin condensation and control of cell cycle. This chain is GTP-binding nuclear protein Ran, found in Tetrahymena pyriformis.